The sequence spans 432 residues: Enolase (432 aa).

Residue glutamine 166 coordinates (2R)-2-phosphoglycerate. The active-site Proton donor is glutamate 210. Mg(2+)-binding residues include aspartate 247, glutamate 288, and aspartate 315. (2R)-2-phosphoglycerate-binding residues include lysine 340, arginine 369, serine 370, and lysine 391. The Proton acceptor role is filled by lysine 340.

Belongs to the enolase family. It depends on Mg(2+) as a cofactor.

Its subcellular location is the cytoplasm. The protein resides in the secreted. It localises to the cell surface. It catalyses the reaction (2R)-2-phosphoglycerate = phosphoenolpyruvate + H2O. It participates in carbohydrate degradation; glycolysis; pyruvate from D-glyceraldehyde 3-phosphate: step 4/5. Functionally, catalyzes the reversible conversion of 2-phosphoglycerate (2-PG) into phosphoenolpyruvate (PEP). It is essential for the degradation of carbohydrates via glycolysis. This Aeropyrum pernix (strain ATCC 700893 / DSM 11879 / JCM 9820 / NBRC 100138 / K1) protein is Enolase.